The primary structure comprises 263 residues: Small ribosomal subunit protein eS4 (263 aa).

The 63-residue stretch at 42-104 folds into the S4 RNA-binding domain; that stretch reads LPLIVFLRNR…TGEHFRLVYD (63 aa).

The protein belongs to the eukaryotic ribosomal protein eS4 family.

The polypeptide is Small ribosomal subunit protein eS4 (RPS4Y1) (Pan paniscus (Pygmy chimpanzee)).